The sequence spans 341 residues: Cell division protein ZipA (341 aa).

Topologically, residues 1–6 are periplasmic; sequence MENLQL. A helical transmembrane segment spans residues 7–27; sequence VLFVLGAIAIVAVLVHGFWSI. Residues 28–341 lie on the Cytoplasmic side of the membrane; it reads RKQQPKSLKE…YLQRIRTQNS (314 aa). Disordered regions lie at residues 35–134 and 157–201; these read LKES…PVLS and QSSL…PEPE. A compositionally biased stretch (polar residues) spans 90–100; that stretch reads TLTSEGQMDSS. The span at 175 to 190 shows a compositional bias: low complexity; sequence SIEVPEPVSEPVLESV. The segment covering 192 to 201 has biased composition (pro residues); that stretch reads EPEPVAPEPE.

Belongs to the ZipA family. Interacts with FtsZ via their C-terminal domains.

It is found in the cell inner membrane. Functionally, essential cell division protein that stabilizes the FtsZ protofilaments by cross-linking them and that serves as a cytoplasmic membrane anchor for the Z ring. Also required for the recruitment to the septal ring of downstream cell division proteins. The sequence is that of Cell division protein ZipA from Shewanella sediminis (strain HAW-EB3).